The sequence spans 212 residues: Ribonuclease HII (212 aa).

An RNase H type-2 domain is found at 19–212 (CIIVGVDEVG…SKISYMFKNS (194 aa)). A divalent metal cation is bound by residues Asp-25, Glu-26, and Asp-120.

This sequence belongs to the RNase HII family. Mn(2+) serves as cofactor. Requires Mg(2+) as cofactor.

The protein localises to the cytoplasm. The enzyme catalyses Endonucleolytic cleavage to 5'-phosphomonoester.. Functionally, endonuclease that specifically degrades the RNA of RNA-DNA hybrids. This Ehrlichia ruminantium (strain Welgevonden) protein is Ribonuclease HII.